The primary structure comprises 154 residues: Large ribosomal subunit protein uL13 (154 aa).

Belongs to the universal ribosomal protein uL13 family. Part of the 50S ribosomal subunit.

In terms of biological role, this protein is one of the early assembly proteins of the 50S ribosomal subunit, although it is not seen to bind rRNA by itself. It is important during the early stages of 50S assembly. This is Large ribosomal subunit protein uL13 from Rhodospirillum rubrum (strain ATCC 11170 / ATH 1.1.1 / DSM 467 / LMG 4362 / NCIMB 8255 / S1).